Reading from the N-terminus, the 356-residue chain is Peptide chain release factor 1 (356 aa).

Gln-233 carries the N5-methylglutamine modification.

It belongs to the prokaryotic/mitochondrial release factor family. In terms of processing, methylated by PrmC. Methylation increases the termination efficiency of RF1.

The protein localises to the cytoplasm. Peptide chain release factor 1 directs the termination of translation in response to the peptide chain termination codons UAG and UAA. This Symbiobacterium thermophilum (strain DSM 24528 / JCM 14929 / IAM 14863 / T) protein is Peptide chain release factor 1.